A 95-amino-acid polypeptide reads, in one-letter code: Aspartyl/glutamyl-tRNA(Asn/Gln) amidotransferase subunit C (95 aa).

It belongs to the GatC family. Heterotrimer of A, B and C subunits.

The catalysed reaction is L-glutamyl-tRNA(Gln) + L-glutamine + ATP + H2O = L-glutaminyl-tRNA(Gln) + L-glutamate + ADP + phosphate + H(+). It catalyses the reaction L-aspartyl-tRNA(Asn) + L-glutamine + ATP + H2O = L-asparaginyl-tRNA(Asn) + L-glutamate + ADP + phosphate + 2 H(+). Allows the formation of correctly charged Asn-tRNA(Asn) or Gln-tRNA(Gln) through the transamidation of misacylated Asp-tRNA(Asn) or Glu-tRNA(Gln) in organisms which lack either or both of asparaginyl-tRNA or glutaminyl-tRNA synthetases. The reaction takes place in the presence of glutamine and ATP through an activated phospho-Asp-tRNA(Asn) or phospho-Glu-tRNA(Gln). The protein is Aspartyl/glutamyl-tRNA(Asn/Gln) amidotransferase subunit C of Azorhizobium caulinodans (strain ATCC 43989 / DSM 5975 / JCM 20966 / LMG 6465 / NBRC 14845 / NCIMB 13405 / ORS 571).